We begin with the raw amino-acid sequence, 219 residues long: Small ribosomal subunit protein uS3 (219 aa).

The KH type-2 domain occupies 38-106 (IREYIENRLK…RVHINIFEVK (69 aa)).

Belongs to the universal ribosomal protein uS3 family. As to quaternary structure, part of the 30S ribosomal subunit. Forms a tight complex with proteins S10 and S14.

Binds the lower part of the 30S subunit head. Binds mRNA in the 70S ribosome, positioning it for translation. The protein is Small ribosomal subunit protein uS3 of Halalkalibacterium halodurans (strain ATCC BAA-125 / DSM 18197 / FERM 7344 / JCM 9153 / C-125) (Bacillus halodurans).